The sequence spans 220 residues: Lactate utilization protein C (220 aa).

Belongs to the LutC/YkgG family.

Its function is as follows. Is involved in L-lactate degradation and allows cells to grow with lactate as the sole carbon source. The chain is Lactate utilization protein C from Anoxybacillus flavithermus (strain DSM 21510 / WK1).